The primary structure comprises 187 residues: GTP cyclohydrolase 1 (187 aa).

3 residues coordinate Zn(2+): Cys76, His79, and Cys148.

The protein belongs to the GTP cyclohydrolase I family. As to quaternary structure, homomer.

It carries out the reaction GTP + H2O = 7,8-dihydroneopterin 3'-triphosphate + formate + H(+). It functions in the pathway cofactor biosynthesis; 7,8-dihydroneopterin triphosphate biosynthesis; 7,8-dihydroneopterin triphosphate from GTP: step 1/1. In Desulforamulus reducens (strain ATCC BAA-1160 / DSM 100696 / MI-1) (Desulfotomaculum reducens), this protein is GTP cyclohydrolase 1.